The sequence spans 275 residues: Activator of basal transcription 1 (275 aa).

Residue Met1 is modified to N-acetylmethionine. Composition is skewed to acidic residues over residues 1-10 and 25-34; these read MEVEGLELDT and AEEEQEESED. The segment at 1–39 is disordered; it reads MEVEGLELDTAELGPLEGSHQKLEAEEEQEESEDAAGGS. An RRM domain is found at 46 to 145; it reads GIVYLGHIPP…RRRSPFRYDL (100 aa). Positions 164 to 194 form a coiled coil; that stretch reads AFERQVRRQRLRAEVAQAKRETDFYLRSVER. The interval 200 to 275 is disordered; the sequence is AADGDSTRPN…RGNSSPARNS (76 aa). Residues 262–275 are compositionally biased toward polar residues; sequence PSESRGNSSPARNS.

It belongs to the ESF2/ABP1 family. Interacts with ESF1/ABTAP. Interacts with IGHMBP2.

It is found in the nucleus. It localises to the nucleolus. Its function is as follows. Could be a novel TATA-binding protein (TBP) which can function as a basal transcription activator. Can act as a regulator of basal transcription for class II genes. This Bos taurus (Bovine) protein is Activator of basal transcription 1 (ABT1).